The primary structure comprises 456 residues: Hydroxyproline dehydrogenase (456 aa).

2 positions are modified to N6-acetyllysine: Lys-310 and Lys-320.

The protein belongs to the proline oxidase family. It depends on FAD as a cofactor.

The enzyme catalyses trans-4-hydroxy-L-proline + a quinone = (3R,5S)-1-pyrroline-3-hydroxy-5-carboxylate + a quinol + H(+). The catalysed reaction is L-proline + a quinone = (S)-1-pyrroline-5-carboxylate + a quinol + H(+). Dehydrogenase that converts trans-4-L-hydroxyproline to delta-1-pyrroline-3-hydroxy-5-carboxylate (Hyp) using ubiquinone-10 as the terminal electron acceptor. Can also use proline as a substrate but with a very much lower efficiency. Does not react with other diastereomers of Hyp: trans-4-D-hydroxyproline and cis-4-L-hydroxyproline. Ubiquininone analogs such as menadione, duroquinone and ubiquinone-1 react more efficiently than oxygen as the terminal electron acceptor during catalysis. The sequence is that of Hydroxyproline dehydrogenase from Mus musculus (Mouse).